The chain runs to 250 residues: 6-phosphogluconate dehydrogenase, decarboxylating (250 aa).

Positions 29 and 56 each coordinate substrate. Lysine 77 carries the post-translational modification N6-acetyllysine. Arginine 214 and histidine 220 together coordinate substrate. Residue 245-248 coordinates NADP(+); that stretch reads SSSY.

It belongs to the 6-phosphogluconate dehydrogenase family. Homodimer.

It localises to the cytoplasm. It carries out the reaction 6-phospho-D-gluconate + NADP(+) = D-ribulose 5-phosphate + CO2 + NADPH. It participates in carbohydrate degradation; pentose phosphate pathway; D-ribulose 5-phosphate from D-glucose 6-phosphate (oxidative stage): step 3/3. Catalyzes the oxidative decarboxylation of 6-phosphogluconate to ribulose 5-phosphate and CO(2), with concomitant reduction of NADP to NADPH. This is 6-phosphogluconate dehydrogenase, decarboxylating (PGD) from Sus scrofa (Pig).